A 169-amino-acid polypeptide reads, in one-letter code: MGIVIGKIELNNEKQIIGELKKKIKGVNFHIAQKVIMLSGNVASIKGNKLIQSEEKQIVDILQRFKGLYSHNYGLKEEALAKIRRIENVYRYIRVRQGYPVRGRTKSNANTVKRQRNVSTGVKTKRKKMYLLNGKPTNRKERKIFNKLKKLQEKKNKEQKKSQKCKTKK.

The interval 149 to 169 (KKLQEKKNKEQKKSQKCKTKK) is disordered. Positions 150-161 (KLQEKKNKEQKK) are enriched in basic and acidic residues.

The protein belongs to the universal ribosomal protein uS13 family. In terms of assembly, part of the small ribosomal subunit.

It localises to the mitochondrion. Its function is as follows. Located at the top of the head of the small subunit, it contacts several helices of the small subunit rRNA. This is Small ribosomal subunit protein uS13m (mrps13) from Dictyostelium discoideum (Social amoeba).